Reading from the N-terminus, the 367-residue chain is Quinolinate synthase (367 aa).

Iminosuccinate contacts are provided by H45 and S62. C109 provides a ligand contact to [4Fe-4S] cluster. Residues 140–142 (YVN) and S161 contribute to the iminosuccinate site. C229 lines the [4Fe-4S] cluster pocket. Iminosuccinate is bound by residues 255–257 (HPE) and T272. Residue C319 coordinates [4Fe-4S] cluster.

This sequence belongs to the quinolinate synthase family. Type 3 subfamily. Requires [4Fe-4S] cluster as cofactor.

Its subcellular location is the cytoplasm. It carries out the reaction iminosuccinate + dihydroxyacetone phosphate = quinolinate + phosphate + 2 H2O + H(+). Its pathway is cofactor biosynthesis; NAD(+) biosynthesis; quinolinate from iminoaspartate: step 1/1. Its function is as follows. Catalyzes the condensation of iminoaspartate with dihydroxyacetone phosphate to form quinolinate. This chain is Quinolinate synthase, found in Geobacillus sp. (strain WCH70).